Here is a 361-residue protein sequence, read N- to C-terminus: MLWIMRFSGLFSAALVIIVLSPSLQSFPPAEAIRSSHLDAYLRFPSSDPPPHRFSFRKAPVFRNAADCAAADIDSGVCNPSLVHVAITLDFEYLRGSIAAVHSILKHSSCPESVFFHFLVSETDLESLIRSTFPELKLKVYYFDPEIVRTLISTSVRQALEQPLNYARNYLADLLEPCVRRVIYLDSDLIVVDDIAKLWMTKLGSKTIGAPEYCHANFTKYFTPAFWSDERFSGAFSGRKPCYFNTGVMVMDLERWRRVGYTEVIEKWMEIQKSDRIYELGSLPPFLLVFAGEVAPIEHRWNQHGLGGDNVRGSCRDLHPGPVSLLHWSGSGKPWFRLDSRRPCPLDTLWAPYDLYGHYSR.

A helical; Signal-anchor for type II membrane protein transmembrane segment spans residues 1-21 (MLWIMRFSGLFSAALVIIVLS). Over 22-361 (PSLQSFPPAE…PYDLYGHYSR (340 aa)) the chain is Lumenal. Asn-217 carries N-linked (GlcNAc...) asparagine glycosylation.

It belongs to the glycosyltransferase 8 family.

It is found in the golgi apparatus membrane. Its pathway is glycan metabolism; pectin biosynthesis. Its function is as follows. May be involved in pectin and/or xylans biosynthesis in cell walls. This Arabidopsis thaliana (Mouse-ear cress) protein is Probable galacturonosyltransferase-like 7 (GATL7).